Here is a 439-residue protein sequence, read N- to C-terminus: Coiled-coil domain-containing protein 166 (439 aa).

Residues 1 to 28 form a disordered region; it reads MAPKKKRGPSAGSQPGGAAAAGAEQPLS. Residues 9–23 are compositionally biased toward low complexity; the sequence is PSAGSQPGGAAAAGA. Coiled coils occupy residues 27 to 74 and 121 to 213; these read LSER…EENR and DGVR…VRAL. The disordered stretch occupies residues 276 to 439; the sequence is PGGPPLWERP…AAAEASPGRA (164 aa). The segment covering 338–365 has biased composition (polar residues); the sequence is VLSSMDSRVPSLATSKVGSRMPSLTASR. 2 stretches are compositionally biased toward low complexity: residues 376-392 and 428-439; these read SLEG…RVSS and AEAAAEASPGRA.

This chain is Coiled-coil domain-containing protein 166 (CCDC166), found in Homo sapiens (Human).